We begin with the raw amino-acid sequence, 188 residues long: MDWLTILGISVALAMDAFAVALAAGAVISPITGRHLFRLGFHFGLFQALMPIGGWLLGMTVQKWISAYDHWIAFGLLAYVGGRMVHEAFEEDDEEKTPSDPTKGMTMVMLSVATSIDAFAVGLSIAMLGVSVWLPATVIGLVAGVLTVAGMLLGRRLGEKWGKRVEICGGLVLCLIGLKILLEHTLLK.

A run of 6 helical transmembrane segments spans residues Trp3–Ala23, Leu39–Met59, Ile65–Val85, Gly104–Ser124, Ile125–Val145, and Ile167–Leu187.

This sequence belongs to the MntP (TC 9.B.29) family.

It localises to the cell inner membrane. Its function is as follows. Probably functions as a manganese efflux pump. This Citrifermentans bemidjiense (strain ATCC BAA-1014 / DSM 16622 / JCM 12645 / Bem) (Geobacter bemidjiensis) protein is Putative manganese efflux pump MntP.